A 132-amino-acid polypeptide reads, in one-letter code: D-ribose pyranase (132 aa).

His20 functions as the Proton donor in the catalytic mechanism. Residues Asp28, His99, and Tyr121–Asn123 contribute to the substrate site.

The protein belongs to the RbsD / FucU family. RbsD subfamily. As to quaternary structure, homodecamer.

The protein resides in the cytoplasm. The catalysed reaction is beta-D-ribopyranose = beta-D-ribofuranose. It participates in carbohydrate metabolism; D-ribose degradation; D-ribose 5-phosphate from beta-D-ribopyranose: step 1/2. Its function is as follows. Catalyzes the interconversion of beta-pyran and beta-furan forms of D-ribose. The protein is D-ribose pyranase of Streptococcus agalactiae serotype III (strain NEM316).